The chain runs to 124 residues: MARILGIDIPNQKRIEIALTYIFGIGLSRSQAILKQANINPDKRVKDLTEEEFVAIRNVASAYKIEGDLRREIALNIKHLSEIGAWRGLRHRKNLPVRGQRTRTNARTRKGPRKTVANKKIESK.

A compositionally biased stretch (basic residues) spans 94–117; the sequence is NLPVRGQRTRTNARTRKGPRKTVA. Residues 94–124 are disordered; it reads NLPVRGQRTRTNARTRKGPRKTVANKKIESK.

This sequence belongs to the universal ribosomal protein uS13 family. As to quaternary structure, part of the 30S ribosomal subunit. Forms a loose heterodimer with protein S19. Forms two bridges to the 50S subunit in the 70S ribosome.

Located at the top of the head of the 30S subunit, it contacts several helices of the 16S rRNA. In the 70S ribosome it contacts the 23S rRNA (bridge B1a) and protein L5 of the 50S subunit (bridge B1b), connecting the 2 subunits; these bridges are implicated in subunit movement. Contacts the tRNAs in the A and P-sites. This Mycoplasma pneumoniae (strain ATCC 29342 / M129 / Subtype 1) (Mycoplasmoides pneumoniae) protein is Small ribosomal subunit protein uS13.